A 101-amino-acid chain; its full sequence is Apolipoprotein C-II (101 aa).

The N-terminal stretch at 1–22 is a signal peptide; that stretch reads MGIRYLLVLVLVLLVLGCEVQG. A propeptide spanning residues 23 to 28 is cleaved from the precursor; it reads AHMPQQ. Positions 66 to 74 are lipid binding; that stretch reads TMDEKIREI. A lipoprotein lipase cofactor region spans residues 78–101; that stretch reads STAAVSTYAGIFTDQLLSMLKGDQ.

It belongs to the apolipoprotein C2 family. Proapolipoprotein C-II is synthesized as a sialic acid containing glycoprotein which is subsequently desialylated prior to its proteolytic processing. In terms of processing, proapolipoprotein C-II, the major form found in plasma undergoes proteolytic cleavage of its N-terminal hexapeptide to generate apolipoprotein C-II, which occurs as the minor form in plasma.

It is found in the secreted. Component of chylomicrons, very low-density lipoproteins (VLDL), low-density lipoproteins (LDL), and high-density lipoproteins (HDL) in plasma. Plays an important role in lipoprotein metabolism as an activator of lipoprotein lipase. Both proapolipoprotein C-II and apolipoprotein C-II can activate lipoprotein lipase. The sequence is that of Apolipoprotein C-II (APOC2) from Neomonachus schauinslandi (Hawaiian monk seal).